The following is a 359-amino-acid chain: Beta-hexosaminidase (359 aa).

Substrate contacts are provided by residues aspartate 64, arginine 72, arginine 138, and 168–169; that span reads KH. Histidine 181 serves as the catalytic Proton donor/acceptor. Catalysis depends on aspartate 252, which acts as the Nucleophile.

The protein belongs to the glycosyl hydrolase 3 family. NagZ subfamily.

Its subcellular location is the cytoplasm. The catalysed reaction is Hydrolysis of terminal non-reducing N-acetyl-D-hexosamine residues in N-acetyl-beta-D-hexosaminides.. Its pathway is cell wall biogenesis; peptidoglycan recycling. Functionally, plays a role in peptidoglycan recycling by cleaving the terminal beta-1,4-linked N-acetylglucosamine (GlcNAc) from peptide-linked peptidoglycan fragments, giving rise to free GlcNAc, anhydro-N-acetylmuramic acid and anhydro-N-acetylmuramic acid-linked peptides. The polypeptide is Beta-hexosaminidase (Thiobacillus denitrificans (strain ATCC 25259 / T1)).